We begin with the raw amino-acid sequence, 278 residues long: MSAISVGQAIILGVVEGLTEFLPISSTGHLKIAEGLMDIQVDDKAVVGFTAVIQVGAIAAVLVYFFADIRRFVTAWGRGLANPAARTNHDYTFTWWVIYATIPVVLVGLAAKPLIDGPLASLWVVAASLLAGSALMWFADQYGRHKRGEDDLSLPDAMIVGTSQILALLFPGFSRSGATISTGLIRDLDRVAATRLSFFLSIPALTGAGLYELKDAVGGGVSAAPLAVGTVVSFFVAYASIAWLLKFVARHNFNAFIIYRVAVAVLLAGLLAGGAINA.

7 consecutive transmembrane segments (helical) span residues 46–66 (VVGF…VYFF), 91–111 (YTFT…GLAA), 119–139 (LASL…MWFA), 153–173 (SLPD…FPGF), 191–211 (VAAT…AGLY), 225–245 (PLAV…AWLL), and 256–276 (FIIY…GGAI).

The protein belongs to the UppP family.

The protein resides in the cell membrane. The enzyme catalyses di-trans,octa-cis-undecaprenyl diphosphate + H2O = di-trans,octa-cis-undecaprenyl phosphate + phosphate + H(+). Its function is as follows. Catalyzes the dephosphorylation of undecaprenyl diphosphate (UPP). Confers resistance to bacitracin. The sequence is that of Undecaprenyl-diphosphatase 1 from Frankia alni (strain DSM 45986 / CECT 9034 / ACN14a).